A 252-amino-acid polypeptide reads, in one-letter code: Geranylgeranylglyceryl phosphate synthase (252 aa).

The Mg(2+) site is built by Asp-25 and Ser-54. Sn-glycerol 1-phosphate is bound by residues Phe-174–Gly-180, Gly-205–Gly-206, and Gly-227–Asn-228.

It belongs to the GGGP/HepGP synthase family. Group II subfamily. As to quaternary structure, homohexamer. Requires Mg(2+) as cofactor.

It catalyses the reaction sn-glycerol 1-phosphate + (2E,6E,10E)-geranylgeranyl diphosphate = sn-3-O-(geranylgeranyl)glycerol 1-phosphate + diphosphate. Prenyltransferase that catalyzes the transfer of the geranylgeranyl moiety of geranylgeranyl diphosphate (GGPP) to the C3 hydroxyl of sn-glycerol-1-phosphate (G1P). This Chitinophaga pinensis (strain ATCC 43595 / DSM 2588 / LMG 13176 / NBRC 15968 / NCIMB 11800 / UQM 2034) protein is Geranylgeranylglyceryl phosphate synthase.